The chain runs to 341 residues: Inner membrane ABC transporter permease protein YejE (341 aa).

The Cytoplasmic segment spans residues 1–21 (MSRLSPVNQARWARFRHNRRG). The helical transmembrane segment at 22-42 (YWSLWIFLVLFGLSLCSELIA) threads the bilayer. Residues 43–143 (NDKPLLVRYD…ARILYGTRIS (101 aa)) lie on the Periplasmic side of the membrane. The region spanning 140–332 (TRISVLFGLM…LLIFIGEAVR (193 aa)) is the ABC transmembrane type-1 domain. Residues 144-164 (VLFGLMLTLCSSVMGVLAGAL) traverse the membrane as a helical segment. Over 165 to 178 (QGYYGGKVDLWGQR) the chain is Cytoplasmic. The chain crosses the membrane as a helical span at residues 179–199 (FIEVWSGMPTLFLIILLSSVV). Residues 200-201 (QP) lie on the Periplasmic side of the membrane. A helical membrane pass occupies residues 202–222 (NFWWLLAITVLFGWMSLVGVV). Over 223–252 (RAEFLRTRNFDYIRAAQALGVSDRSIILRH) the chain is Cytoplasmic. Residues 253-273 (MLPNAMVATLTFLPFILCSSI) traverse the membrane as a helical segment. Over 274–307 (TTLTSLDFLGFGLPLGSPSLGELLLQGKNNLQAP) the chain is Periplasmic. The chain crosses the membrane as a helical span at residues 308–328 (WLGITAFLSVAILLSLLIFIG). The Cytoplasmic portion of the chain corresponds to 329–341 (EAVRDAFDPNKAV).

The protein belongs to the binding-protein-dependent transport system permease family. OppBC subfamily.

Its subcellular location is the cell inner membrane. In terms of biological role, probably part of a binding-protein-dependent transport system. Probably responsible for the translocation of the substrate across the membrane. The sequence is that of Inner membrane ABC transporter permease protein YejE (yejE) from Escherichia coli (strain K12).